The following is a 259-amino-acid chain: Short chain dehydrogenase ausX (259 aa).

6 residues coordinate NADP(+): Ile13, Asp59, Arg121, Tyr153, Lys157, and Val186. The active-site Proton acceptor is Tyr153. The active-site Proton donor is the Tyr153. Lys157 serves as the catalytic Lowers pKa of active site Tyr.

Belongs to the short-chain dehydrogenases/reductases (SDR) family.

The protein operates within secondary metabolite biosynthesis; terpenoid biosynthesis. Functionally, short chain dehydrogenase; part of the gene cluster A that mediates the biosynthesis of the fungal meroterpenoid acetoxydehydroaustin. The first step of the pathway is the synthesis of 3,5-dimethylorsellinic acid by the polyketide synthase ausA. 3,5-dimethylorsellinic acid is then prenylated by the polyprenyl transferase ausN. Further epoxidation by the FAD-dependent monooxygenase ausM and cyclization by the probable terpene cyclase ausL lead to the formation of protoaustinoid A. Protoaustinoid A is then oxidized to spiro-lactone preaustinoid A3 by the combined action of the FAD-binding monooxygenases ausB and ausC, and the dioxygenase ausE. Acid-catalyzed keto-rearrangement and ring contraction of the tetraketide portion of preaustinoid A3 by ausJ lead to the formation of preaustinoid A4. The aldo-keto reductase ausK, with the help of ausH, is involved in the next step by transforming preaustinoid A4 into isoaustinone which is in turn hydroxylated by the P450 monooxygenase ausI to form austinolide. The cytochrome P450 monooxygenase ausG then modifies austinolide to austinol. Austinol is further acetylated to austin by the O-acetyltransferase ausP, which spontaneously changes to dehydroaustin. The cytochrome P450 monooxygenase then converts dehydroaustin is into 7-dehydrodehydroaustin. The hydroxylation catalyzed by ausR permits the second O-acetyltransferase ausQ to add an additional acetyl group to the molecule, leading to the formation of acetoxydehydroaustin. Due to genetic rearrangements of the clusters and the subsequent loss of some enzymes, the end product of the Penicillium brasilianum austinoid biosynthesis clusters is acetoxydehydroaustin. The chain is Short chain dehydrogenase ausX from Penicillium brasilianum.